A 1174-amino-acid chain; its full sequence is DNA-directed RNA polymerase subunit beta' (1174 aa).

The Zn(2+) site is built by cysteine 60, cysteine 62, cysteine 75, and cysteine 78. Residues aspartate 450, aspartate 452, and aspartate 454 each contribute to the Mg(2+) site. Zn(2+)-binding residues include cysteine 795, cysteine 869, cysteine 876, and cysteine 879.

Belongs to the RNA polymerase beta' chain family. The RNAP catalytic core consists of 2 alpha, 1 beta, 1 beta' and 1 omega subunit. When a sigma factor is associated with the core the holoenzyme is formed, which can initiate transcription. The cofactor is Mg(2+). It depends on Zn(2+) as a cofactor.

The catalysed reaction is RNA(n) + a ribonucleoside 5'-triphosphate = RNA(n+1) + diphosphate. Its function is as follows. DNA-dependent RNA polymerase catalyzes the transcription of DNA into RNA using the four ribonucleoside triphosphates as substrates. The polypeptide is DNA-directed RNA polymerase subunit beta' (Clostridium kluyveri (strain ATCC 8527 / DSM 555 / NBRC 12016 / NCIMB 10680 / K1)).